The following is a 98-amino-acid chain: NADH-ubiquinone oxidoreductase chain 4L (98 aa).

3 consecutive transmembrane segments (helical) span residues 2–22 (PSISINIILAFAAALLGMLMF), 28–48 (SSLLCLEGMMLSMFILSTLII), and 61–81 (IMLLVFSACEAAIGLALLVMV).

The protein belongs to the complex I subunit 4L family. In terms of assembly, core subunit of respiratory chain NADH dehydrogenase (Complex I) which is composed of 45 different subunits.

It localises to the mitochondrion inner membrane. The catalysed reaction is a ubiquinone + NADH + 5 H(+)(in) = a ubiquinol + NAD(+) + 4 H(+)(out). Functionally, core subunit of the mitochondrial membrane respiratory chain NADH dehydrogenase (Complex I) which catalyzes electron transfer from NADH through the respiratory chain, using ubiquinone as an electron acceptor. Part of the enzyme membrane arm which is embedded in the lipid bilayer and involved in proton translocation. The protein is NADH-ubiquinone oxidoreductase chain 4L (MT-ND4L) of Allocebus trichotis (Hairy-eared dwarf lemur).